The sequence spans 165 residues: Transcription antitermination protein NusB (165 aa).

Belongs to the NusB family.

In terms of biological role, involved in transcription antitermination. Required for transcription of ribosomal RNA (rRNA) genes. Binds specifically to the boxA antiterminator sequence of the ribosomal RNA (rrn) operons. The sequence is that of Transcription antitermination protein NusB from Chlorobium phaeobacteroides (strain DSM 266 / SMG 266 / 2430).